A 374-amino-acid polypeptide reads, in one-letter code: Probable inactive patatin-3-Kuras 1 (374 aa).

Residues 1 to 11 form the signal peptide; the sequence is MMLATTSSTFA. One can recognise a PNPLA domain in the interval 20–217; the sequence is LSIDGGGIKG…AAVDPSLLSI (198 aa). The GXGXXG motif lies at 24–29; that stretch reads GGGIKG. N-linked (GlcNAc...) asparagine glycans are attached at residues asparagine 48 and asparagine 191. The active-site Proton acceptor is aspartate 204. N-linked (GlcNAc...) asparagine glycosylation occurs at asparagine 257.

The protein belongs to the patatin family. Post-translationally, N-glycosylated. In terms of tissue distribution, tuber.

The protein localises to the vacuole. The polypeptide is Probable inactive patatin-3-Kuras 1 (pat3-k1) (Solanum tuberosum (Potato)).